The sequence spans 112 residues: Putative pterin-4-alpha-carbinolamine dehydratase (112 aa).

This sequence belongs to the pterin-4-alpha-carbinolamine dehydratase family.

It catalyses the reaction (4aS,6R)-4a-hydroxy-L-erythro-5,6,7,8-tetrahydrobiopterin = (6R)-L-erythro-6,7-dihydrobiopterin + H2O. The chain is Putative pterin-4-alpha-carbinolamine dehydratase from Shewanella sp. (strain MR-7).